A 786-amino-acid chain; its full sequence is AT-rich interactive domain-containing protein 3 (786 aa).

Over residues 1–16 (MENLTEIESTMESLTE) the composition is skewed to low complexity. Disordered regions lie at residues 1–182 (MENL…HHAD), 199–251 (SGDH…IPAN), and 395–420 (DTTVDSTNNKDAHVEANTERQDNSSA). 2 stretches are compositionally biased toward basic and acidic residues: residues 18-64 (ESER…HEDS) and 87-97 (DLPKIDDEKNS). Residues 130-139 (ENIVSSEVSS) show a composition bias toward low complexity. 5 stretches are compositionally biased toward basic and acidic residues: residues 141–156 (ILKDDGDAVEVDRDTA), 169–182 (KLSEDTGSPHHHAD), 199–219 (SGDHEEFPVNPDNKHSEENQS), 234–248 (AEEREIISPGEHKEI), and 402–416 (NNKDAHVEANTERQD). Positions 494 to 585 (EEDQSAFMKE…ALLEYERHKV (92 aa)) constitute an ARID domain. A disordered region spans residues 606 to 638 (QASGSGRARRDAASRAMQGWHSQRLNGNGEVSD). The sHSP domain occupies 686-786 (VTVVDVGPPA…FVRVPLEQLE (101 aa)).

The protein belongs to the small heat shock protein (HSP20) family.

Its subcellular location is the nucleus. This Arabidopsis thaliana (Mouse-ear cress) protein is AT-rich interactive domain-containing protein 3 (ARID3).